The following is a 956-amino-acid chain: Protein translocase subunit SecA (956 aa).

ATP-binding positions include Gln-87, 105–109 (GEGKT), and Asp-524. Zn(2+) is bound by residues Cys-940, Cys-942, Cys-951, and His-952.

It belongs to the SecA family. Monomer and homodimer. Part of the essential Sec protein translocation apparatus which comprises SecA, SecYEG and auxiliary proteins SecDF-YajC and YidC. It depends on Zn(2+) as a cofactor.

Its subcellular location is the cell inner membrane. The protein resides in the cytoplasm. The enzyme catalyses ATP + H2O + cellular proteinSide 1 = ADP + phosphate + cellular proteinSide 2.. Its function is as follows. Part of the Sec protein translocase complex. Interacts with the SecYEG preprotein conducting channel. Has a central role in coupling the hydrolysis of ATP to the transfer of proteins into and across the cell membrane, serving both as a receptor for the preprotein-SecB complex and as an ATP-driven molecular motor driving the stepwise translocation of polypeptide chains across the membrane. This chain is Protein translocase subunit SecA, found in Beijerinckia indica subsp. indica (strain ATCC 9039 / DSM 1715 / NCIMB 8712).